The primary structure comprises 304 residues: Protoheme IX farnesyltransferase (304 aa).

The next 7 helical transmembrane spans lie at 24-44 (VMTL…GTIH), 45-65 (PVIA…AAAL), 107-127 (VFVM…FSIF), 145-165 (IVIG…AVTG), 172-192 (VLLF…LALF), 234-254 (WIGG…LVFV), and 277-297 (LFGY…GDRL).

The protein belongs to the UbiA prenyltransferase family. Protoheme IX farnesyltransferase subfamily.

Its subcellular location is the cell inner membrane. It catalyses the reaction heme b + (2E,6E)-farnesyl diphosphate + H2O = Fe(II)-heme o + diphosphate. It participates in porphyrin-containing compound metabolism; heme O biosynthesis; heme O from protoheme: step 1/1. Its function is as follows. Converts heme B (protoheme IX) to heme O by substitution of the vinyl group on carbon 2 of heme B porphyrin ring with a hydroxyethyl farnesyl side group. In Novosphingobium aromaticivorans (strain ATCC 700278 / DSM 12444 / CCUG 56034 / CIP 105152 / NBRC 16084 / F199), this protein is Protoheme IX farnesyltransferase.